Here is a 106-residue protein sequence, read N- to C-terminus: ATP-dependent Clp protease adapter protein ClpS (106 aa).

Belongs to the ClpS family. Binds to the N-terminal domain of the chaperone ClpA.

Its function is as follows. Involved in the modulation of the specificity of the ClpAP-mediated ATP-dependent protein degradation. The sequence is that of ATP-dependent Clp protease adapter protein ClpS from Escherichia coli O127:H6 (strain E2348/69 / EPEC).